Consider the following 199-residue polypeptide: MKQSHFFAHLSRLKLINRWPLMRNVRTENVSEHSLQVAMVAHALAAIKNRKFGGNVNAERIALLAMYHDASEVLTGDLPTPVKYFNSQIAQEYKAIEKIAQQKLVDMVPEELRDIFAPLIDEHAYSDEEKSLVKQADALCAYLKCLEELAAGNNEFLLAKTRLEATLEARRSQEMDYFMEIFVPSFHLSLDEISQDSPL.

Residues 18-19 and His33 each bind substrate; that span reads RW. An HD domain is found at 30 to 142; the sequence is VSEHSLQVAM…VKQADALCAY (113 aa). 3 residues coordinate a divalent metal cation: His33, His68, and Asp69. Residues Asp69, 77–80, and Asp137 contribute to the substrate site; that span reads DLPT. Asp137 serves as a coordination point for a divalent metal cation.

This sequence belongs to the 5DNU family. In terms of assembly, homodimer. A divalent metal cation serves as cofactor.

Its subcellular location is the cytoplasm. The catalysed reaction is a 2'-deoxyribonucleoside 5'-phosphate + H2O = a 2'-deoxyribonucleoside + phosphate. Its function is as follows. Catalyzes the strictly specific dephosphorylation of 2'-deoxyribonucleoside 5'-monophosphates. This Escherichia coli (strain K12 / MC4100 / BW2952) protein is 5'-deoxynucleotidase YfbR.